A 263-amino-acid chain; its full sequence is Tryptophan synthase alpha chain (263 aa).

Active-site proton acceptor residues include Glu-49 and Asp-60.

Belongs to the TrpA family. As to quaternary structure, tetramer of two alpha and two beta chains.

It catalyses the reaction (1S,2R)-1-C-(indol-3-yl)glycerol 3-phosphate + L-serine = D-glyceraldehyde 3-phosphate + L-tryptophan + H2O. It participates in amino-acid biosynthesis; L-tryptophan biosynthesis; L-tryptophan from chorismate: step 5/5. Its function is as follows. The alpha subunit is responsible for the aldol cleavage of indoleglycerol phosphate to indole and glyceraldehyde 3-phosphate. The sequence is that of Tryptophan synthase alpha chain from Cereibacter sphaeroides (strain KD131 / KCTC 12085) (Rhodobacter sphaeroides).